A 317-amino-acid chain; its full sequence is Transaldolase (317 aa).

The active-site Schiff-base intermediate with substrate is the lysine 132.

It belongs to the transaldolase family. Type 1 subfamily. In terms of assembly, homodimer.

It is found in the cytoplasm. It catalyses the reaction D-sedoheptulose 7-phosphate + D-glyceraldehyde 3-phosphate = D-erythrose 4-phosphate + beta-D-fructose 6-phosphate. Its pathway is carbohydrate degradation; pentose phosphate pathway; D-glyceraldehyde 3-phosphate and beta-D-fructose 6-phosphate from D-ribose 5-phosphate and D-xylulose 5-phosphate (non-oxidative stage): step 2/3. In terms of biological role, transaldolase is important for the balance of metabolites in the pentose-phosphate pathway. This chain is Transaldolase, found in Yersinia pseudotuberculosis serotype O:3 (strain YPIII).